The following is a 364-amino-acid chain: MSSFFLSISPLVLALFHVVVQVCSQSCQVAISELQSERKVIILNSDKRSLKQPSNGKYSWKSGESIYFICGKDLKTLTCSPSSINAKRFDCVKPPDVTERDINRECNGKSSKTFQMGFRASGGLFVPYYELCYLMDTCSVSHVKHRLLGASFGGVSGTREKSFQSFVCPGLRYNTHYTQASQKQPDPRFYFQRGHLFPDRDAPVFAWKLATYSYGNCVPQWNTINSEGGNWWTLEYLVFKYAQQTPNTEYTIYDGVLYDPRNKQYLAKQEKKIEIPVWFWKVVTNQTHVLKVFFVSHNLKGTKQTFCNTNRCVNDRAKGTKTVETWDFYNEASRGITHCCYWKDLARKNPLPIEVQREINNKKN.

A signal peptide spans 1 to 24 (MSSFFLSISPLVLALFHVVVQVCS). The N-linked (GlcNAc...) asparagine glycan is linked to asparagine 285.

The protein belongs to the DNA/RNA non-specific endonuclease family. The cofactor is Mg(2+). As to expression, saliva (at protein level). Female salivary gland.

Its subcellular location is the secreted. Its function is as follows. Hydrolyzes double-stranded DNA with no sequence specificity. Does not cleave ssDNA and RNA. May facilitate blood meal intake by lowering the local viscosity created by the release of host DNA. This chain is Salivary endonuclease, found in Culex quinquefasciatus (Southern house mosquito).